Consider the following 209-residue polypeptide: Redox-sensing transcriptional repressor Rex (209 aa).

The H-T-H motif DNA-binding region spans leucine 16–phenylalanine 55. Position 90 to 95 (glycine 90 to glycine 95) interacts with NAD(+).

The protein belongs to the transcriptional regulatory Rex family. As to quaternary structure, homodimer.

It is found in the cytoplasm. In terms of biological role, modulates transcription in response to changes in cellular NADH/NAD(+) redox state. The sequence is that of Redox-sensing transcriptional repressor Rex from Bacillus cereus (strain ATCC 10987 / NRS 248).